The following is a 446-amino-acid chain: Phosphoglucosamine mutase (446 aa).

The active-site Phosphoserine intermediate is the serine 99. Residues serine 99, aspartate 242, aspartate 244, and aspartate 246 each contribute to the Mg(2+) site. Serine 99 carries the post-translational modification Phosphoserine.

The protein belongs to the phosphohexose mutase family. Mg(2+) is required as a cofactor. In terms of processing, activated by phosphorylation.

The enzyme catalyses alpha-D-glucosamine 1-phosphate = D-glucosamine 6-phosphate. In terms of biological role, catalyzes the conversion of glucosamine-6-phosphate to glucosamine-1-phosphate. This chain is Phosphoglucosamine mutase, found in Wolinella succinogenes (strain ATCC 29543 / DSM 1740 / CCUG 13145 / JCM 31913 / LMG 7466 / NCTC 11488 / FDC 602W) (Vibrio succinogenes).